The chain runs to 123 residues: Small ribosomal subunit protein uS17 (123 aa).

The protein belongs to the universal ribosomal protein uS17 family. Part of the 30S ribosomal subunit.

One of the primary rRNA binding proteins, it binds specifically to the 5'-end of 16S ribosomal RNA. The chain is Small ribosomal subunit protein uS17 from Pyrobaculum aerophilum (strain ATCC 51768 / DSM 7523 / JCM 9630 / CIP 104966 / NBRC 100827 / IM2).